A 37-amino-acid chain; its full sequence is Large ribosomal subunit protein bL36 (37 aa).

The protein belongs to the bacterial ribosomal protein bL36 family.

This chain is Large ribosomal subunit protein bL36, found in Acetivibrio thermocellus (strain ATCC 27405 / DSM 1237 / JCM 9322 / NBRC 103400 / NCIMB 10682 / NRRL B-4536 / VPI 7372) (Clostridium thermocellum).